The sequence spans 130 residues: Small ribosomal subunit protein uS8 (130 aa).

Belongs to the universal ribosomal protein uS8 family. As to quaternary structure, part of the 30S ribosomal subunit. Contacts proteins S5 and S12.

In terms of biological role, one of the primary rRNA binding proteins, it binds directly to 16S rRNA central domain where it helps coordinate assembly of the platform of the 30S subunit. This chain is Small ribosomal subunit protein uS8, found in Cereibacter sphaeroides (strain KD131 / KCTC 12085) (Rhodobacter sphaeroides).